A 447-amino-acid polypeptide reads, in one-letter code: tRNA-2-methylthio-N(6)-dimethylallyladenosine synthase (447 aa).

One can recognise an MTTase N-terminal domain in the interval 14–130; that stretch reads KKVYIRTFGC…LPAMIANAGQ (117 aa). The [4Fe-4S] cluster site is built by Cys-23, Cys-59, Cys-93, Cys-166, Cys-170, and Cys-173. The region spanning 152–382 is the Radical SAM core domain; sequence RSGTISAFIP…IALQGSISGE (231 aa). Positions 385–447 constitute a TRAM domain; sequence AAEVGAVVEV…TPATLIGTPA (63 aa).

This sequence belongs to the methylthiotransferase family. MiaB subfamily. Monomer. The cofactor is [4Fe-4S] cluster.

The protein localises to the cytoplasm. It catalyses the reaction N(6)-dimethylallyladenosine(37) in tRNA + (sulfur carrier)-SH + AH2 + 2 S-adenosyl-L-methionine = 2-methylsulfanyl-N(6)-dimethylallyladenosine(37) in tRNA + (sulfur carrier)-H + 5'-deoxyadenosine + L-methionine + A + S-adenosyl-L-homocysteine + 2 H(+). Catalyzes the methylthiolation of N6-(dimethylallyl)adenosine (i(6)A), leading to the formation of 2-methylthio-N6-(dimethylallyl)adenosine (ms(2)i(6)A) at position 37 in tRNAs that read codons beginning with uridine. This Chlorobium phaeobacteroides (strain BS1) protein is tRNA-2-methylthio-N(6)-dimethylallyladenosine synthase.